Consider the following 126-residue polypeptide: Aspartate 1-decarboxylase (126 aa).

Ser-25 serves as the catalytic Schiff-base intermediate with substrate; via pyruvic acid. Position 25 is a pyruvic acid (Ser) (Ser-25). Thr-57 is a binding site for substrate. Residue Tyr-58 is the Proton donor of the active site. Residue 73-75 (GAA) coordinates substrate.

The protein belongs to the PanD family. Heterooctamer of four alpha and four beta subunits. It depends on pyruvate as a cofactor. In terms of processing, is synthesized initially as an inactive proenzyme, which is activated by self-cleavage at a specific serine bond to produce a beta-subunit with a hydroxyl group at its C-terminus and an alpha-subunit with a pyruvoyl group at its N-terminus.

Its subcellular location is the cytoplasm. It catalyses the reaction L-aspartate + H(+) = beta-alanine + CO2. Its pathway is cofactor biosynthesis; (R)-pantothenate biosynthesis; beta-alanine from L-aspartate: step 1/1. Its function is as follows. Catalyzes the pyruvoyl-dependent decarboxylation of aspartate to produce beta-alanine. The polypeptide is Aspartate 1-decarboxylase (Tolumonas auensis (strain DSM 9187 / NBRC 110442 / TA 4)).